Here is a 350-residue protein sequence, read N- to C-terminus: tRNA uridine(34) hydroxylase (350 aa).

The region spanning 146-240 is the Rhodanese domain; the sequence is DDPDALFIDM…YARKAREQGL (95 aa). The active-site Cysteine persulfide intermediate is the C200.

It belongs to the TrhO family.

The enzyme catalyses uridine(34) in tRNA + AH2 + O2 = 5-hydroxyuridine(34) in tRNA + A + H2O. Functionally, catalyzes oxygen-dependent 5-hydroxyuridine (ho5U) modification at position 34 in tRNAs. This is tRNA uridine(34) hydroxylase from Escherichia fergusonii (strain ATCC 35469 / DSM 13698 / CCUG 18766 / IAM 14443 / JCM 21226 / LMG 7866 / NBRC 102419 / NCTC 12128 / CDC 0568-73).